The primary structure comprises 151 residues: Protein NrdI (151 aa).

The protein belongs to the NrdI family.

Its function is as follows. Probably involved in ribonucleotide reductase function. The chain is Protein NrdI from Mesoplasma florum (strain ATCC 33453 / NBRC 100688 / NCTC 11704 / L1) (Acholeplasma florum).